The following is a 262-amino-acid chain: Acyl-[acyl-carrier-protein]--UDP-N-acetylglucosamine O-acyltransferase (262 aa).

This sequence belongs to the transferase hexapeptide repeat family. LpxA subfamily. As to quaternary structure, homotrimer.

It is found in the cytoplasm. The enzyme catalyses a (3R)-hydroxyacyl-[ACP] + UDP-N-acetyl-alpha-D-glucosamine = a UDP-3-O-[(3R)-3-hydroxyacyl]-N-acetyl-alpha-D-glucosamine + holo-[ACP]. It participates in glycolipid biosynthesis; lipid IV(A) biosynthesis; lipid IV(A) from (3R)-3-hydroxytetradecanoyl-[acyl-carrier-protein] and UDP-N-acetyl-alpha-D-glucosamine: step 1/6. Functionally, involved in the biosynthesis of lipid A, a phosphorylated glycolipid that anchors the lipopolysaccharide to the outer membrane of the cell. This Burkholderia lata (strain ATCC 17760 / DSM 23089 / LMG 22485 / NCIMB 9086 / R18194 / 383) protein is Acyl-[acyl-carrier-protein]--UDP-N-acetylglucosamine O-acyltransferase.